We begin with the raw amino-acid sequence, 189 residues long: Probable nicotinate-nucleotide adenylyltransferase (189 aa).

Belongs to the NadD family.

It carries out the reaction nicotinate beta-D-ribonucleotide + ATP + H(+) = deamido-NAD(+) + diphosphate. It participates in cofactor biosynthesis; NAD(+) biosynthesis; deamido-NAD(+) from nicotinate D-ribonucleotide: step 1/1. In terms of biological role, catalyzes the reversible adenylation of nicotinate mononucleotide (NaMN) to nicotinic acid adenine dinucleotide (NaAD). The protein is Probable nicotinate-nucleotide adenylyltransferase of Staphylococcus aureus (strain USA300 / TCH1516).